Here is a 207-residue protein sequence, read N- to C-terminus: ATP synthase subunit b 2 (207 aa).

Residues 53 to 72 (TYASQLLWLVITFSVFYLLM) traverse the membrane as a helical segment.

This sequence belongs to the ATPase B chain family. As to quaternary structure, F-type ATPases have 2 components, F(1) - the catalytic core - and F(0) - the membrane proton channel. F(1) has five subunits: alpha(3), beta(3), gamma(1), delta(1), epsilon(1). F(0) has three main subunits: a(1), b(2) and c(10-14). The alpha and beta chains form an alternating ring which encloses part of the gamma chain. F(1) is attached to F(0) by a central stalk formed by the gamma and epsilon chains, while a peripheral stalk is formed by the delta and b chains.

It is found in the cell inner membrane. Its function is as follows. F(1)F(0) ATP synthase produces ATP from ADP in the presence of a proton or sodium gradient. F-type ATPases consist of two structural domains, F(1) containing the extramembraneous catalytic core and F(0) containing the membrane proton channel, linked together by a central stalk and a peripheral stalk. During catalysis, ATP synthesis in the catalytic domain of F(1) is coupled via a rotary mechanism of the central stalk subunits to proton translocation. Functionally, component of the F(0) channel, it forms part of the peripheral stalk, linking F(1) to F(0). The b'-subunit is a diverged and duplicated form of b found in plants and photosynthetic bacteria. The sequence is that of ATP synthase subunit b 2 (atpF2) from Rhizobium etli (strain CIAT 652).